The primary structure comprises 97 residues: Large ribosomal subunit protein bL28 (97 aa).

This sequence belongs to the bacterial ribosomal protein bL28 family.

The sequence is that of Large ribosomal subunit protein bL28 from Brucella ovis (strain ATCC 25840 / 63/290 / NCTC 10512).